A 156-amino-acid polypeptide reads, in one-letter code: 6,7-dimethyl-8-ribityllumazine synthase (156 aa).

Residues Phe-25, 59-61, and 83-85 contribute to the 5-amino-6-(D-ribitylamino)uracil site; these read AFE and AVI. 88-89 is a (2S)-2-hydroxy-3-oxobutyl phosphate binding site; that stretch reads GT. The Proton donor role is filled by His-91. Residue Phe-116 participates in 5-amino-6-(D-ribitylamino)uracil binding. Residue Arg-130 participates in (2S)-2-hydroxy-3-oxobutyl phosphate binding.

The protein belongs to the DMRL synthase family.

The catalysed reaction is (2S)-2-hydroxy-3-oxobutyl phosphate + 5-amino-6-(D-ribitylamino)uracil = 6,7-dimethyl-8-(1-D-ribityl)lumazine + phosphate + 2 H2O + H(+). It functions in the pathway cofactor biosynthesis; riboflavin biosynthesis; riboflavin from 2-hydroxy-3-oxobutyl phosphate and 5-amino-6-(D-ribitylamino)uracil: step 1/2. Catalyzes the formation of 6,7-dimethyl-8-ribityllumazine by condensation of 5-amino-6-(D-ribitylamino)uracil with 3,4-dihydroxy-2-butanone 4-phosphate. This is the penultimate step in the biosynthesis of riboflavin. The polypeptide is 6,7-dimethyl-8-ribityllumazine synthase (Desulfovibrio desulfuricans (strain ATCC 27774 / DSM 6949 / MB)).